Reading from the N-terminus, the 107-residue chain is Phosphoribosyl-ATP pyrophosphatase (107 aa).

This sequence belongs to the PRA-PH family.

It localises to the cytoplasm. The catalysed reaction is 1-(5-phospho-beta-D-ribosyl)-ATP + H2O = 1-(5-phospho-beta-D-ribosyl)-5'-AMP + diphosphate + H(+). Its pathway is amino-acid biosynthesis; L-histidine biosynthesis; L-histidine from 5-phospho-alpha-D-ribose 1-diphosphate: step 2/9. This is Phosphoribosyl-ATP pyrophosphatase from Sinorhizobium fredii (strain NBRC 101917 / NGR234).